We begin with the raw amino-acid sequence, 899 residues long: Inner tegument protein (899 aa).

Residues 463–899 are interaction with large tegument protein; sequence WNYTWLDATS…SAILDAELSK (437 aa).

It belongs to the herpesviridae inner tegument protein family. In terms of assembly, interacts (via C-terminus) with the large tegument protein/LTP (via N-terminus).

The protein resides in the virion tegument. It localises to the host cytoplasm. The protein localises to the host nucleus. It is found in the host Golgi apparatus. Its subcellular location is the host trans-Golgi network. Functionally, plays an essential role in cytoplasmic secondary envelopment during viral egress. Interacts with the capsid via the large tegument protein/LTP and participates in its transport to the host trans-Golgi network (TGN) where secondary envelopment occurs. Modulates tegumentation and capsid accumulation at the viral assembly complex. This is Inner tegument protein (63) from Saimiri sciureus (Common squirrel monkey).